Reading from the N-terminus, the 587-residue chain is Nucleoporin ndc-1 (587 aa).

Topologically, residues methionine 1–lysine 79 are cytoplasmic. Residues alanine 32–alanine 55 form a disordered region. The helical transmembrane segment at leucine 80–leucine 100 threads the bilayer. The Perinuclear space portion of the chain corresponds to lysine 101–proline 121. A helical transmembrane segment spans residues threonine 122–isoleucine 142. At histidine 143–alanine 161 the chain is on the cytoplasmic side. The helical transmembrane segment at tryptophan 162 to valine 182 threads the bilayer. The Perinuclear space portion of the chain corresponds to serine 183–phenylalanine 187. The chain crosses the membrane as a helical span at residues phenylalanine 188–isoleucine 208. At phenylalanine 209–alanine 255 the chain is on the cytoplasmic side. A helical membrane pass occupies residues methionine 256–isoleucine 276. Topologically, residues asparagine 277–histidine 281 are perinuclear space. Residues leucine 282–valine 302 form a helical membrane-spanning segment. The Cytoplasmic segment spans residues asparagine 303 to isoleucine 587.

It belongs to the NDC1 family.

The protein localises to the nucleus. Its subcellular location is the nuclear pore complex. It localises to the nucleus membrane. Its function is as follows. Component of the nuclear pore complex (NPC), which plays a key role in de novo assembly and insertion of NPC in the nuclear envelope. The polypeptide is Nucleoporin ndc-1 (npp-22) (Caenorhabditis briggsae).